The following is a 624-amino-acid chain: Cilia- and flagella-associated protein 206 (624 aa).

It belongs to the CFAP206 family.

It is found in the cytoplasm. It localises to the cytoskeleton. The protein localises to the cilium axoneme. The protein resides in the cilium basal body. Its function is as follows. Essential for sperm motility and is involved in the regulation of the beating frequency of motile cilia on the epithelial cells of the respiratory tract. Required for the establishment of radial spokes in sperm flagella. The polypeptide is Cilia- and flagella-associated protein 206 (cfap206) (Danio rerio (Zebrafish)).